We begin with the raw amino-acid sequence, 127 residues long: NADPH-dependent 7-cyano-7-deazaguanine reductase (127 aa).

Residue cysteine 40 is the Thioimide intermediate of the active site. Aspartate 47 (proton donor) is an active-site residue. Substrate is bound by residues 62 to 64 and 81 to 82; these read VEL and HE.

The protein belongs to the GTP cyclohydrolase I family. QueF type 1 subfamily.

It is found in the cytoplasm. It carries out the reaction 7-aminomethyl-7-carbaguanine + 2 NADP(+) = 7-cyano-7-deazaguanine + 2 NADPH + 3 H(+). It functions in the pathway tRNA modification; tRNA-queuosine biosynthesis. In terms of biological role, catalyzes the NADPH-dependent reduction of 7-cyano-7-deazaguanine (preQ0) to 7-aminomethyl-7-deazaguanine (preQ1). The sequence is that of NADPH-dependent 7-cyano-7-deazaguanine reductase from Campylobacter jejuni (strain RM1221).